The sequence spans 442 residues: D-serine dehydratase (442 aa).

Lys-118 is subject to N6-(pyridoxal phosphate)lysine.

This sequence belongs to the serine/threonine dehydratase family. DsdA subfamily. In terms of assembly, monomer. Pyridoxal 5'-phosphate is required as a cofactor.

It catalyses the reaction D-serine = pyruvate + NH4(+). The chain is D-serine dehydratase from Shigella sonnei (strain Ss046).